The sequence spans 473 residues: ATP synthase subunit beta (473 aa).

153-160 (GGAGVGKT) contributes to the ATP binding site.

This sequence belongs to the ATPase alpha/beta chains family. As to quaternary structure, F-type ATPases have 2 components, CF(1) - the catalytic core - and CF(0) - the membrane proton channel. CF(1) has five subunits: alpha(3), beta(3), gamma(1), delta(1), epsilon(1). CF(0) has three main subunits: a(1), b(2) and c(9-12). The alpha and beta chains form an alternating ring which encloses part of the gamma chain. CF(1) is attached to CF(0) by a central stalk formed by the gamma and epsilon chains, while a peripheral stalk is formed by the delta and b chains.

It localises to the cell inner membrane. The enzyme catalyses ATP + H2O + 4 H(+)(in) = ADP + phosphate + 5 H(+)(out). Its function is as follows. Produces ATP from ADP in the presence of a proton gradient across the membrane. The catalytic sites are hosted primarily by the beta subunits. The polypeptide is ATP synthase subunit beta (Rickettsia massiliae (strain Mtu5)).